The sequence spans 241 residues: DNA-binding dual master transcriptional regulator RpaA (241 aa).

The Response regulatory domain occupies 3–119 (RILIIDDDPA…EMLARVRALL (117 aa)). Asp52 bears the 4-aspartylphosphate mark. The segment at residues 132–231 (SEILNQGPLT…VYGAGYCLEL (100 aa)) is a DNA-binding region (ompR/PhoB-type).

As to quaternary structure, interacts with reduced ferredoxin (petF). Interacts with CikA, RpaB, SasA, Sll0038 (pixG) and a number of other proteins. In terms of processing, phosphorylated by SasA; phosphorylation is maximal when KaiC phosphorylation is active during the circadian cycle. Dephosphorylated by CikA. CikA and SasA cooperation generates RpaA activity oscillation that is distinct from that generated by CikA or SasA alone and offset from the rhythm of KaiC phosphorylation.

It is found in the cytoplasm. Functionally, response regulator of 2 two-component regulatory systems SasA/RpaA and CikA/RpaA involved in genome-wide circadian gene expression. The histidine kinases have opposing effects modulated by the clock oscillator proteins; SasA phosphorylates RpaA (stimulated by fully phosphorylated KaiC1) while CikA dephosphorylates phospho-RpaA (stimulated by the phospho-Ser-432-KaiC1-KaiB complex). In terms of biological role, the RpaA regulon is about 300 genes, and includes itself, cikA, sigE, sigG, genes involved in photosynthesis, carbon metabolism in the light and dark, phototaxis, CRISPR arrays 2 and 3 as well as nearly 90 ncRNAs. Genes are up- or down-regulated in its absence. Involved in regulation of primary sugar and amino acid metabolism and in adaptation to light changes. Regulates the accumulation of the monomeric photosystem I and the D1 protein under high light conditions. Overexpression causes cells to grow more slowly, increases levels of transcripts for clock oscillator genes in the light and the dark, increases levels of SigE protein, increases accumulation of sugar catabolic enzymes in the dark with concomitant decreases in most sugar metabolites. Plays a role in cell division; overexpression from the psbAII promoter increases expression of some cell-division-related genes, alters cell volume and changes the outer cell membrane and cell wall appearance. The sequence is that of DNA-binding dual master transcriptional regulator RpaA from Synechocystis sp. (strain ATCC 27184 / PCC 6803 / Kazusa).